The primary structure comprises 251 residues: NADPH-dependent oxidoreductase (251 aa).

This sequence belongs to the flavin oxidoreductase frp family. FMN is required as a cofactor.

Reduces FMN, organic nitro compounds and disulfide DTNB. Involved in maintenance of the cellular redox state and the disulfide stress response. This is NADPH-dependent oxidoreductase (nfrA) from Staphylococcus aureus (strain USA300).